A 268-amino-acid chain; its full sequence is UPF0328 protein ECU03_0040 (268 aa).

Belongs to the UPF0328 family.

This Encephalitozoon cuniculi (strain GB-M1) (Microsporidian parasite) protein is UPF0328 protein ECU03_0040.